The primary structure comprises 145 residues: MRHRKQGRKFGRTSSHRKAMFKNMSASLINHELIKTTLPKAKELRTIVEPLVTLAKREHKLRQELDTNSNEFKAQSVALRRQAFDFLRNKAAVTKLFEEFGARYAERAGGYTRILKCGYRFGDKAPMAFIELVDRPQVEEAADEE.

The protein belongs to the bacterial ribosomal protein bL17 family. In terms of assembly, part of the 50S ribosomal subunit. Contacts protein L32.

The protein is Large ribosomal subunit protein bL17 of Francisella tularensis subsp. holarctica (strain FTNF002-00 / FTA).